The chain runs to 145 residues: UI (145 aa).

An N-terminal signal peptide occupies residues 1–22 (MKPVPLVLLITSVLLTTHIPLS). Val-143 is subject to Valine amide.

It belongs to the sauvagine/corticotropin-releasing factor/urotensin I family.

It localises to the secreted. Its function is as follows. Urotensin is found in the teleost caudal neurosecretory system. It has a suggested role in osmoregulation and as a corticotropin-releasing factor. The non-hormonal portion of this precursor may be a urotensin binding protein, urophysin. This Carassius auratus (Goldfish) protein is UI.